Here is a 392-residue protein sequence, read N- to C-terminus: Formate-dependent phosphoribosylglycinamide formyltransferase (392 aa).

Residues 22–23 (EL) and Glu-82 each bind N(1)-(5-phospho-beta-D-ribosyl)glycinamide. Residues Arg-114, Lys-155, 160-165 (SSGKGQ), 195-198 (EGVV), and Glu-203 contribute to the ATP site. Positions 119–308 (RLAAEELGLP…EFALHVRAFL (190 aa)) constitute an ATP-grasp domain. Glu-267 and Glu-279 together coordinate Mg(2+). Residues Asp-286, Lys-355, and 362–363 (RR) contribute to the N(1)-(5-phospho-beta-D-ribosyl)glycinamide site.

This sequence belongs to the PurK/PurT family. As to quaternary structure, homodimer.

The catalysed reaction is N(1)-(5-phospho-beta-D-ribosyl)glycinamide + formate + ATP = N(2)-formyl-N(1)-(5-phospho-beta-D-ribosyl)glycinamide + ADP + phosphate + H(+). It participates in purine metabolism; IMP biosynthesis via de novo pathway; N(2)-formyl-N(1)-(5-phospho-D-ribosyl)glycinamide from N(1)-(5-phospho-D-ribosyl)glycinamide (formate route): step 1/1. Its function is as follows. Involved in the de novo purine biosynthesis. Catalyzes the transfer of formate to 5-phospho-ribosyl-glycinamide (GAR), producing 5-phospho-ribosyl-N-formylglycinamide (FGAR). Formate is provided by PurU via hydrolysis of 10-formyl-tetrahydrofolate. This chain is Formate-dependent phosphoribosylglycinamide formyltransferase, found in Salmonella schwarzengrund (strain CVM19633).